The primary structure comprises 164 residues: Phosphopantetheine adenylyltransferase (164 aa).

The protein belongs to the eukaryotic CoaD family.

The protein localises to the cytoplasm. It carries out the reaction (R)-4'-phosphopantetheine + ATP + H(+) = 3'-dephospho-CoA + diphosphate. It participates in cofactor biosynthesis; coenzyme A biosynthesis. In terms of biological role, reversibly transfers an adenylyl group from ATP to 4'-phosphopantetheine, yielding dephospho-CoA (dPCoA) and pyrophosphate. The polypeptide is Phosphopantetheine adenylyltransferase (Methanothermobacter thermautotrophicus (strain ATCC 29096 / DSM 1053 / JCM 10044 / NBRC 100330 / Delta H) (Methanobacterium thermoautotrophicum)).